The primary structure comprises 443 residues: Trimethylamine monooxygenase (443 aa).

FAD-binding residues include D37, Q39, L45, and W46. NADP(+) is bound by residues W70 and N72. FAD is bound by residues N72 and V125. Residues Y170, S202, S203, S205, and R226 each contribute to the NADP(+) site. The FAD site is built by Q315 and T318. Position 409 (R409) interacts with NADP(+).

The protein belongs to the FMO family. FAD is required as a cofactor.

The catalysed reaction is trimethylamine + NADPH + O2 = trimethylamine N-oxide + NADP(+) + H2O. Catalyzes the oxidation of trimethylamine (TMA) to produce trimethylamine N-oxide (TMAO). In vitro, has a broad substrate specificity, oxidizing many nitrogen- and sulfur-containing compounds, including dimethylamine (DMA), dimethylsulfide (DMS) and dimethylsulfoxide (DMSO). In Pelagibacter ubique (strain HTCC1002), this protein is Trimethylamine monooxygenase.